We begin with the raw amino-acid sequence, 358 residues long: Protein-glutamate methylesterase/protein-glutamine glutaminase 1 (358 aa).

One can recognise a Response regulatory domain in the interval Arg8–Glu125. Asp59 is modified (4-aspartylphosphate). The CheB-type methylesterase domain occupies Pro157–Ala352. Residues Ser177, His203, and Asp299 contribute to the active site.

Belongs to the CheB family. In terms of processing, phosphorylated by CheA. Phosphorylation of the N-terminal regulatory domain activates the methylesterase activity.

It localises to the cytoplasm. The catalysed reaction is [protein]-L-glutamate 5-O-methyl ester + H2O = L-glutamyl-[protein] + methanol + H(+). The enzyme catalyses L-glutaminyl-[protein] + H2O = L-glutamyl-[protein] + NH4(+). Involved in chemotaxis. Part of a chemotaxis signal transduction system that modulates chemotaxis in response to various stimuli. Catalyzes the demethylation of specific methylglutamate residues introduced into the chemoreceptors (methyl-accepting chemotaxis proteins or MCP) by CheR. Also mediates the irreversible deamidation of specific glutamine residues to glutamic acid. This Xanthomonas campestris pv. campestris (strain ATCC 33913 / DSM 3586 / NCPPB 528 / LMG 568 / P 25) protein is Protein-glutamate methylesterase/protein-glutamine glutaminase 1.